Reading from the N-terminus, the 497-residue chain is Guanosine-5'-triphosphate,3'-diphosphate pyrophosphatase (497 aa).

This sequence belongs to the GppA/Ppx family. GppA subfamily.

It catalyses the reaction guanosine 3'-diphosphate 5'-triphosphate + H2O = guanosine 3',5'-bis(diphosphate) + phosphate + H(+). Its pathway is purine metabolism; ppGpp biosynthesis; ppGpp from GTP: step 2/2. Functionally, catalyzes the conversion of pppGpp to ppGpp. Guanosine pentaphosphate (pppGpp) is a cytoplasmic signaling molecule which together with ppGpp controls the 'stringent response', an adaptive process that allows bacteria to respond to amino acid starvation, resulting in the coordinated regulation of numerous cellular activities. This chain is Guanosine-5'-triphosphate,3'-diphosphate pyrophosphatase, found in Photobacterium profundum (strain SS9).